A 334-amino-acid polypeptide reads, in one-letter code: G-protein coupled receptor 12 (334 aa).

Over 1-48 (MNEDPKVNLSGLPRDCIEAGTPENISAAVPSQGSVVESEPELVVNPWD) the chain is Extracellular. Asn-8 and Asn-24 each carry an N-linked (GlcNAc...) asparagine glycan. Residues 49 to 69 (IVLCSSGTLICCENAVVVLII) traverse the membrane as a helical segment. Residues 70 to 78 (FHSPSLRAP) are Cytoplasmic-facing. A helical membrane pass occupies residues 79–99 (MFLLIGSLALADLLAGLGLII). At 100–113 (NFVFAYLLQSEATK) the chain is on the extracellular side. Residues 114-134 (LVTIGLIVASFSASVCSLLAI) traverse the membrane as a helical segment. The Cytoplasmic portion of the chain corresponds to 135–158 (TVDRYLSLYYALTYHSERTVTFTY). The helical transmembrane segment at 159-179 (VMLVMLWGTSTCLGLLPVMGW) threads the bilayer. The Extracellular segment spans residues 180–199 (NCLRDESTCSVVRPLTKNNA). The chain crosses the membrane as a helical span at residues 200-220 (AILSISFLFMFALMLQLYIQI). The Cytoplasmic segment spans residues 221 to 252 (CKIVMRHAHQIALQHHFLATSHYVTTRKGIST). Residues 253 to 273 (LALILGTFAACWMPFTLYSLI) traverse the membrane as a helical segment. Residues 274–282 (ADYTYPSIY) lie on the Extracellular side of the membrane. A helical transmembrane segment spans residues 283–303 (TYATLLPATYNSIINPVIYAF). At 304-334 (RNQEIQKALCLICCGCIPNTLSQRARSPSDV) the chain is on the cytoplasmic side. Residue Cys-317 is the site of S-palmitoyl cysteine attachment. Phosphoserine occurs at positions 330 and 332.

Belongs to the G-protein coupled receptor 1 family. As to expression, expressed in the brain, pituitary gland and testis.

Its subcellular location is the cell membrane. Its function is as follows. Receptor with constitutive G(s) signaling activity that activates cyclic AMP. Promotes neurite outgrowth and blocks myelin inhibition in neurons. This is G-protein coupled receptor 12 (Gpr12) from Rattus norvegicus (Rat).